Here is a 201-residue protein sequence, read N- to C-terminus: Large ribosomal subunit protein bL9 (201 aa).

The span at 150-165 (EAERQAAGEDLTQRRD) shows a compositional bias: basic and acidic residues. Residues 150–201 (EAERQAAGEDLTQRRDDEEEEAVEAAEFFESEELAPGDEEEEAAGEEEDAKE) are disordered. The span at 166–201 (DEEEEAVEAAEFFESEELAPGDEEEEAAGEEEDAKE) shows a compositional bias: acidic residues.

The protein belongs to the bacterial ribosomal protein bL9 family.

In terms of biological role, binds to the 23S rRNA. The chain is Large ribosomal subunit protein bL9 from Parvibaculum lavamentivorans (strain DS-1 / DSM 13023 / NCIMB 13966).